We begin with the raw amino-acid sequence, 2210 residues long: MDETVSELKDLVRKHIPNRHEFAHQKDAFLSHCHSGSLLQEGFKLLSNLVELESCESHACHLNTCQKYVDVILSDHGIPCPTLPKVIPDGFKLTGKTLILLETFVRVNPEEFERKWKSDMTKLLNLKQDLLRSGITLVPVVDGRTNYSNRFTPEWVVERIRWLLIEILRKSRSSAEIDIEDQEYQRLIHSLSNVRNQSLGFENIECLKRNLLEYDDRLAKSLFVGVKGDVRESVIREELMKLRLWYKKEVFDKNLGKFRITNRSELLNNLIRLGKHEDNTTSDCPFCVNKFMDIIYSLTFTALKRQDREKSNSELDQYVVCPHEKAYLGVLSICNKIKGLKVFNTRRNTLLFLDLIMVNFLDDLFTAKPEALDSLRRSGLILGQMVTLVNDRALDFLEAVKLIKKKIETNVKWVENCSKILRRSQQDIWSQISVWARYPDLSKLISIAQTISSDRPIMRYSAGGNFNTECKHKTFHMMSDAEQVEAFKILSSVSLSLINSMKTSFSSRLLINEKEYSRYFGNVRLRECYQQRFFLTDGLIVILFYQKTGERSGCYSIYTCEDGVLVEKGSFYCDPKRFFLPIFSQEVLVEMCDEMTTWLDFNSDLMVISKEKLRLLLLSILCAPSKRNQVFLQGLRYFLMAYSNQFHHVDLLSKLKVECMSGSEVIVQRLAVDLFQCLLGEGVDSDPYFARRFKYLLNVSYLCHLITKETPDRLTDQIKCFEKFIEPKIDFNCVIVNPSLNGQLTEAQEGMMLDGLDKFYSKTLKDCSDTKLPGVSNELLSYCISLFNKGKLKVTGELKNDPFKPNITSTALDLSSNKSVVVPKLDELGNVLSVYDREKMISSCVSSMAERFKTKGRYNIDPSTLDYLILKNLTGLVSIGSKTQRDCEELSMMFEGLTEEQAEAFNDIKNSVQLAMVKMKDSKSGDVNLSPNQKEGRVKSSTGTLEELWGPFGIMREIRTEVSLHEVKDFDPDVLASDLYKELCDVVYYSSSKPEYFLERPLEVCPLGLLLKNLTTSAYFDEEYFECFKYLLIQGHYDQKLGSYEHRSRSRLGFTNEALRVKDEVRLSMRESNSEAIADKLDRSYFTNAALRNLCFYSDDSPTEFTSISSNNGNLKFGLSYKEQVGSNRELYVGDLNTKLITRLVEDFAEAVGSSMRYTCLSSEKEFDRAICDMKLAVNNGDLSCSLDHSKWGPTMSPALFLTFLQFLELRTPKERNIINLEPVLNVLRWHLHKVIEVPVNVAEAYCTGNLKRSLGLMGCGSSSVGEEFFHQFMPVQGEIPSHIMSVLDMGQGILHNMSDLYGLITEQFLNYVLDLLYDVIPTSYTSSDDQVTLIKLPCASDDNQVNDEWLEMLCFHEYLSSKLNKFVSPKSVAGTFVAEFKSRFFVMGEETPLLTQFVAAALHNVKCKTPTQLSETIDTICDQCVANGVSVQIVSKISQRVNQLIKYSGFKETPFGAVEKQDVKDWVDGTRGYRLQRKIESIFSDDEMTGFIRSCAKRVFNDIKRGKVFEENLISLIGRDGDDALVGFLRYSSCSEQDIMRALGFRWVNLSSFGDLRLVLRTKLMTSRRVLEREEVPTLIKTLQSRLSRNFTKGVKKILAESINKSAFQSSVASGFIGFCKSIGSKCVRDGEGGFLYIKDIYTKVKPCLCEVCNMKRGVIYCRPSLEKIEKFSKPILWDYFSLVLTNACEIGEWVFSSVKEPQIPVVLSNRNLFWAVKPRIVRQLEDQLGMNHVLYSIRKNYPKLFDEHLSPFMSDLQVNRTLDGRKLKFLDVCIALDLMNENLGIVSHLLKARDNSVYIVKQSDCAMAHVRQSDYVDKEVGLSPQQVCYNFMVQIILSSMVNPLVMSTSCLKSFFWFNEVLELEDDGQIELGELTDFTFLVRDQKISRAMFIEDIAMGYVISNLEDVRLYIDKITIGEQPLAPGRHINDLLDLLGNFDDHEDCDLRFLIQVEHSRTSTKYRFKRKMTYSFSVTCVSKVIDLKEASVELQVVDVTQSVSGSGGSHLLLDGVSMIAGLPIFTGQGTFNMASLMMDADLVETNDNLILTDVRFSFGGFLSELSDKYAYTLNGPVDQGEPLVLRDGHFFMGTEKVSTYRVELTGDIIVKAIGALDDPEDVNALLNQLWPYLKSTAQVMLFQQEDFVLVYDLHRSGLIRSLELIGDWVEFVNFKVAYSKSLKDLVVSDNQGSLRLRGIMCRPLARRNTVEDIE.

An endonuclease region spans residues 26–284 (KDAFLSHCHS…KHEDNTTSDC (259 aa)). Residues glutamate 51, aspartate 89, and glutamate 102 each contribute to the Mn(2+) site. The active site involves lysine 115. In terms of domain architecture, RdRp catalytic spans 1172-1368 (CDMKLAVNNG…YLSSKLNKFV (197 aa)). Aspartate 1330 is a binding site for Mg(2+).

Belongs to the Bunyavirales RNA polymerase family. In terms of assembly, homomultimer; the oligomeric structure is essential for the polymerase activity. Interacts with nucleoprotein N. Interacts with protein Z; this interaction inhibits viral transcription and replication, Z partially blocks the product exit tunnel for the releasing nascent RNA product. Mn(2+) is required as a cofactor. It depends on Mg(2+) as a cofactor.

Its subcellular location is the virion. It localises to the host cytoplasm. It carries out the reaction RNA(n) + a ribonucleoside 5'-triphosphate = RNA(n+1) + diphosphate. Its function is as follows. RNA-dependent RNA polymerase, which is responsible for the replication and transcription of the viral RNA genome using antigenomic RNA as an intermediate. During transcription, synthesizes subgenomic RNAs and assures their capping by a cap-snatching mechanism, which involves the endonuclease activity cleaving the host capped pre-mRNAs. These short capped RNAs are then used as primers for viral transcription. The 3'-end of subgenomic mRNAs molecules are heterogeneous and not polyadenylated. The replicase function is to direct synthesis of antigenomic and genomic RNA which are encapsidated and non capped. As a consequence of the use of the same enzyme for both transcription and replication, these mechanisms need to be well coordinated. These processes may be regulated by proteins N and Z in a dose-dependent manner. Z protein inhibits the viral polymerase L und thus the viral transcription and RNA synthesis. This chain is RNA-directed RNA polymerase L, found in Tacaribe virus (strain Franze-Fernandez) (TCRV).